The sequence spans 1506 residues: Phosphatidylinositol 3-kinase C2 domain-containing subunit gamma (1506 aa).

Residues 1–34 (MAYSWQTEPNRTEPQEDGSDTQQFHHTNQHLSSR) form a disordered region. Residues 20–34 (DTQQFHHTNQHLSSR) show a composition bias toward polar residues. The 87-residue stretch at 285–371 (DTKFRVKISI…IQLHLQKNRD (87 aa)) folds into the PI3K-RBD domain. Positions 541–689 (LQSHLSFTVC…SPLTLQIDFP (149 aa)) constitute a C2 PI3K-type domain. Residues 704–880 (RTDHEEPPRE…QELLAALQFC (177 aa)) enclose the PIK helical domain. The PI3K/PI4K catalytic domain occupies 949 to 1227 (DRDACSYFTS…KIKESLECFP (279 aa)). Positions 955–961 (YFTSNAS) are G-loop. The interval 1091–1099 (GVCDRHNDN) is catalytic loop. Positions 1110-1136 (HIDFGKFLGHAQTFGGIKRDRAPFIFT) are activation loop. In terms of domain architecture, PX spans 1260 to 1372 (LNKTRTIQRV…SFFLSEHIQP (113 aa)). The region spanning 1381–1506 (DPGENSLDKS…KWYPLGNSII (126 aa)) is the C2 domain.

This sequence belongs to the PI3/PI4-kinase family. As to expression, expressed predominantly in liver. Also found in kidney, lung and lymphoid tissue. Down-regulated in BeF3 cells expressing the BCR-ABL oncogene p185.

Its subcellular location is the membrane. It carries out the reaction a 1,2-diacyl-sn-glycero-3-phospho-(1D-myo-inositol 4-phosphate) + ATP = a 1,2-diacyl-sn-glycero-3-phospho-(1D-myo-inositol-3,4-bisphosphate) + ADP + H(+). The catalysed reaction is a 1,2-diacyl-sn-glycero-3-phospho-(1D-myo-inositol) + ATP = a 1,2-diacyl-sn-glycero-3-phospho-(1D-myo-inositol-3-phosphate) + ADP + H(+). In terms of biological role, generates phosphatidylinositol 3-phosphate (PtdIns3P) and phosphatidylinositol 3,4-bisphosphate (PtdIns(3,4)P2) that act as second messengers. May play a role in SDF1A-stimulated chemotaxis. In Mus musculus (Mouse), this protein is Phosphatidylinositol 3-kinase C2 domain-containing subunit gamma (Pik3c2g).